The primary structure comprises 499 residues: Inosine-5'-monophosphate dehydrogenase (499 aa).

CBS domains are found at residues 106-165 and 169-225; these read IDRE…SDAV and MTDE…GSAA. Residues Asp260 and 308-310 each bind NAD(+); that span reads GIG. Gly310 and Gly312 together coordinate K(+). Ser313 serves as a coordination point for IMP. Cys315 serves as a coordination point for K(+). The active-site Thioimidate intermediate is the Cys315. Residues 348 to 350, 371 to 372, and 395 to 399 contribute to the IMP site; these read DGG, GS, and YRGMG. Arg411 serves as the catalytic Proton acceptor. Residue Glu425 coordinates IMP. Positions 479, 480, and 481 each coordinate K(+). Positions 480-499 are disordered; sequence GHPHDVMITDEAPNYSPQGE.

It belongs to the IMPDH/GMPR family. As to quaternary structure, homotetramer. K(+) serves as cofactor.

It carries out the reaction IMP + NAD(+) + H2O = XMP + NADH + H(+). Its pathway is purine metabolism; XMP biosynthesis via de novo pathway; XMP from IMP: step 1/1. With respect to regulation, mycophenolic acid (MPA) is a non-competitive inhibitor that prevents formation of the closed enzyme conformation by binding to the same site as the amobile flap. In contrast, mizoribine monophosphate (MZP) is a competitive inhibitor that induces the closed conformation. MPA is a potent inhibitor of mammalian IMPDHs but a poor inhibitor of the bacterial enzymes. MZP is a more potent inhibitor of bacterial IMPDH. Its function is as follows. Catalyzes the conversion of inosine 5'-phosphate (IMP) to xanthosine 5'-phosphate (XMP), the first committed and rate-limiting step in the de novo synthesis of guanine nucleotides, and therefore plays an important role in the regulation of cell growth. This Halobacterium salinarum (strain ATCC 700922 / JCM 11081 / NRC-1) (Halobacterium halobium) protein is Inosine-5'-monophosphate dehydrogenase.